Reading from the N-terminus, the 1230-residue chain is ATP-dependent helicase/nuclease subunit A (1230 aa).

The UvrD-like helicase ATP-binding domain maps to 4-480; the sequence is RNWTGPQEAA…IDLSHNFRSR (477 aa). 25–32 is a binding site for ATP; the sequence is AGAGSGKT. The region spanning 517 to 799 is the UvrD-like helicase C-terminal domain; that stretch reads AQLEGSGPPV…RIMSIHQAKG (283 aa). The tract at residues 535 to 554 is disordered; it reads TSVGRDTAGTADDEPDRSDE. Positions 545 to 554 are enriched in acidic residues; sequence ADDEPDRSDE.

This sequence belongs to the helicase family. AddA subfamily. As to quaternary structure, heterodimer of AddA and AddB/RexB. Requires Mg(2+) as cofactor.

It carries out the reaction Couples ATP hydrolysis with the unwinding of duplex DNA by translocating in the 3'-5' direction.. It catalyses the reaction ATP + H2O = ADP + phosphate + H(+). Functionally, the heterodimer acts as both an ATP-dependent DNA helicase and an ATP-dependent, dual-direction single-stranded exonuclease. Recognizes the chi site generating a DNA molecule suitable for the initiation of homologous recombination. The AddA nuclease domain is required for chi fragment generation; this subunit has the helicase and 3' -&gt; 5' nuclease activities. The protein is ATP-dependent helicase/nuclease subunit A of Desulforudis audaxviator (strain MP104C).